The chain runs to 336 residues: Mitochondrial thiamine diphosphate carrier 2 (336 aa).

Helical transmembrane passes span 11–27 (RRAL…GGIS), 88–105 (VPAL…FTVL), 127–150 (YLSY…FDLL), 182–199 (LYSG…YAGL), 230–246 (SVSS…AGTF), and 303–322 (GLFP…FVAY). 3 Solcar repeats span residues 11–111 (RRAL…LKTF), 124–210 (LSPY…FKRS), and 231–328 (VSSF…ISDW).

The protein belongs to the mitochondrial carrier (TC 2.A.29) family. Ubiquitous.

It is found in the mitochondrion inner membrane. In terms of biological role, mitochondrial transporter that mediates uptake of thiamine diphosphate (ThDP) into mitochondria. This chain is Mitochondrial thiamine diphosphate carrier 2, found in Zea mays (Maize).